A 311-amino-acid polypeptide reads, in one-letter code: Putative ribose-phosphate pyrophosphokinase 2 (311 aa).

ATP contacts are provided by residues 38 to 40 (DGE) and 97 to 98 (RQ). Mg(2+)-binding residues include H131 and D171. D219 contributes to the D-ribose 5-phosphate binding site.

This sequence belongs to the ribose-phosphate pyrophosphokinase family. Class I subfamily. Homohexamer. It depends on Mg(2+) as a cofactor.

It localises to the cytoplasm. The enzyme catalyses D-ribose 5-phosphate + ATP = 5-phospho-alpha-D-ribose 1-diphosphate + AMP + H(+). It participates in metabolic intermediate biosynthesis; 5-phospho-alpha-D-ribose 1-diphosphate biosynthesis; 5-phospho-alpha-D-ribose 1-diphosphate from D-ribose 5-phosphate (route I): step 1/1. Functionally, involved in the biosynthesis of the central metabolite phospho-alpha-D-ribosyl-1-pyrophosphate (PRPP) via the transfer of pyrophosphoryl group from ATP to 1-hydroxyl of ribose-5-phosphate (Rib-5-P). In Listeria innocua serovar 6a (strain ATCC BAA-680 / CLIP 11262), this protein is Putative ribose-phosphate pyrophosphokinase 2.